We begin with the raw amino-acid sequence, 151 residues long: S-ribosylhomocysteine lyase (151 aa).

Positions 54, 58, and 121 each coordinate Fe cation.

The protein belongs to the LuxS family. In terms of assembly, homodimer. The cofactor is Fe cation.

The catalysed reaction is S-(5-deoxy-D-ribos-5-yl)-L-homocysteine = (S)-4,5-dihydroxypentane-2,3-dione + L-homocysteine. Its function is as follows. Involved in the synthesis of autoinducer 2 (AI-2) which is secreted by bacteria and is used to communicate both the cell density and the metabolic potential of the environment. The regulation of gene expression in response to changes in cell density is called quorum sensing. Catalyzes the transformation of S-ribosylhomocysteine (RHC) to homocysteine (HC) and 4,5-dihydroxy-2,3-pentadione (DPD). This chain is S-ribosylhomocysteine lyase, found in Clostridioides difficile (strain 630) (Peptoclostridium difficile).